A 517-amino-acid chain; its full sequence is Crotonobetaine/carnitine--CoA ligase (517 aa).

The protein belongs to the ATP-dependent AMP-binding enzyme family.

It catalyses the reaction 4-(trimethylamino)butanoate + ATP + CoA = 4-(trimethylamino)butanoyl-CoA + AMP + diphosphate. It carries out the reaction crotonobetaine + ATP + CoA = crotonobetainyl-CoA + AMP + diphosphate. The catalysed reaction is (R)-carnitine + ATP + CoA = (R)-carnitinyl-CoA + AMP + diphosphate. It functions in the pathway amine and polyamine metabolism; carnitine metabolism. Functionally, catalyzes the transfer of CoA to carnitine, generating the initial carnitinyl-CoA needed for the CaiB reaction cycle. Also has activity toward crotonobetaine and gamma-butyrobetaine. The sequence is that of Crotonobetaine/carnitine--CoA ligase from Salmonella heidelberg (strain SL476).